The primary structure comprises 266 residues: Vitamin B12-binding protein (266 aa).

The first 22 residues, 1–22, serve as a signal peptide directing secretion; the sequence is MAKQMFRALVALLLTLPVWLYA. Residues 25–266 form the Fe/B12 periplasmic-binding domain; sequence RVITLSPANT…QLCNALSQVN (242 aa). Cyanocob(III)alamin contacts are provided by residues Tyr-50 and 242–246; that span reads DWFER. Cys-183 and Cys-259 are oxidised to a cystine.

This sequence belongs to the BtuF family. In terms of assembly, the complex is composed of two ATP-binding proteins (BtuD), two transmembrane proteins (BtuC) and a solute-binding protein (BtuF).

The protein resides in the periplasm. Part of the ABC transporter complex BtuCDF involved in vitamin B12 import. Binds vitamin B12 and delivers it to the periplasmic surface of BtuC. This chain is Vitamin B12-binding protein, found in Salmonella paratyphi A (strain ATCC 9150 / SARB42).